The sequence spans 98 residues: snRNA-activating protein complex subunit 5 (98 aa).

Residues glutamine 73–serine 82 show a composition bias toward polar residues. Positions glutamine 73–serine 98 are disordered. At threonine 85 the chain carries Phosphothreonine. Acidic residues predominate over residues glutamate 86 to serine 98.

In terms of assembly, part of the SNAPc complex composed of 5 subunits: SNAPC1, SNAPC2, SNAPC3, SNAPC4 and SNAPC5. SNAPC5 interacts with SNAPC4.

Its subcellular location is the nucleus. Its function is as follows. Part of the SNAPc complex required for the transcription of both RNA polymerase II and III small-nuclear RNA genes. Binds to the proximal sequence element (PSE), a non-TATA-box basal promoter element common to these 2 types of genes. Recruits TBP and BRF2 to the U6 snRNA TATA box. The chain is snRNA-activating protein complex subunit 5 (SNAPC5) from Homo sapiens (Human).